The sequence spans 279 residues: Early nodulin-like protein 18 (279 aa).

Residues 1-24 form the signal peptide; it reads MAGAVATVSVGLAWLGLMAAAASA. A Phytocyanin domain is found at 25–133; it reads TQFRVGGGRG…GEKLVVVVMA (109 aa). Cysteine 82 and cysteine 121 are oxidised to a cystine. A glycan (N-linked (GlcNAc...) asparagine) is linked at asparagine 83. Residues 138–256 form a disordered region; sequence RHAPPPSPPA…ANDRSGAAAA (119 aa). Pro residues predominate over residues 140–168; the sequence is APPPSPPAVPPPVAPVPMPSPASSPPSPA. Residues 169–185 show a composition bias toward low complexity; the sequence is PAAATPSLAPSPVATTP. Residues 186–199 are compositionally biased toward pro residues; the sequence is SPSPSVSPMAPAPA. 2 stretches are compositionally biased toward low complexity: residues 212–226 and 234–256; these read AAMA…GGVA and TDGA…AAAA. Asparagine 238 carries an N-linked (GlcNAc...) asparagine glycan. Residue serine 251 is the site of GPI-anchor amidated serine attachment. The propeptide at 252–279 is removed in mature form; sequence GAAAAAPVVAGVVVTSLGAYIGYAMLAI.

The protein belongs to the early nodulin-like (ENODL) family. Specifically expressed in reproductive tissues. Mainly observed in developing seeds and in mature leaves.

Its subcellular location is the cell membrane. In terms of biological role, may act as a carbohydrate transporter. Promotes tolerance to salt stress in a redox-dependent manner. This is Early nodulin-like protein 18 from Oryza sativa subsp. japonica (Rice).